A 57-amino-acid chain; its full sequence is uncharacterized protein (57 aa).

Residues 31–57 (HHQTSSFNPMPSEVSLHTSHNFPHTTF) form a disordered region. Residues 33–57 (QTSSFNPMPSEVSLHTSHNFPHTTF) show a composition bias toward polar residues.

This is an uncharacterized protein from Invertebrate iridescent virus 6 (IIV-6).